We begin with the raw amino-acid sequence, 489 residues long: Glutamate--tRNA ligase (489 aa).

A 'HIGH' region motif is present at residues 12–22; sequence PSPTGIPHVGM. Positions 256–260 match the 'KMSKS' region motif; that stretch reads KLSKR. Lys-259 contacts ATP.

This sequence belongs to the class-I aminoacyl-tRNA synthetase family. Glutamate--tRNA ligase type 1 subfamily. Monomer.

It is found in the cytoplasm. It carries out the reaction tRNA(Glu) + L-glutamate + ATP = L-glutamyl-tRNA(Glu) + AMP + diphosphate. In terms of biological role, catalyzes the attachment of glutamate to tRNA(Glu) in a two-step reaction: glutamate is first activated by ATP to form Glu-AMP and then transferred to the acceptor end of tRNA(Glu). This is Glutamate--tRNA ligase from Mycobacterium ulcerans (strain Agy99).